Reading from the N-terminus, the 261-residue chain is DNA-directed RNA polymerase subunit Rpo3 (261 aa).

It belongs to the archaeal Rpo3/eukaryotic RPB3 RNA polymerase subunit family. As to quaternary structure, part of the RNA polymerase complex.

It is found in the cytoplasm. The catalysed reaction is RNA(n) + a ribonucleoside 5'-triphosphate = RNA(n+1) + diphosphate. DNA-dependent RNA polymerase (RNAP) catalyzes the transcription of DNA into RNA using the four ribonucleoside triphosphates as substrates. This is DNA-directed RNA polymerase subunit Rpo3 from Pyrococcus furiosus (strain ATCC 43587 / DSM 3638 / JCM 8422 / Vc1).